Consider the following 589-residue polypeptide: Aspartate--tRNA ligase (589 aa).

An L-aspartate-binding site is contributed by Glu-174. An aspartate region spans residues 198–201 (QLFK). Residue Arg-220 coordinates L-aspartate. ATP is bound by residues 220-222 (RDE) and Gln-229. His-448 serves as a coordination point for L-aspartate. An ATP-binding site is contributed by Glu-483. An L-aspartate-binding site is contributed by Arg-490. ATP is bound at residue 535-538 (GIDR).

This sequence belongs to the class-II aminoacyl-tRNA synthetase family. Type 1 subfamily. As to quaternary structure, homodimer.

The protein localises to the cytoplasm. It catalyses the reaction tRNA(Asp) + L-aspartate + ATP = L-aspartyl-tRNA(Asp) + AMP + diphosphate. Its function is as follows. Catalyzes the attachment of L-aspartate to tRNA(Asp) in a two-step reaction: L-aspartate is first activated by ATP to form Asp-AMP and then transferred to the acceptor end of tRNA(Asp). This is Aspartate--tRNA ligase from Xylella fastidiosa (strain M12).